A 142-amino-acid polypeptide reads, in one-letter code: Large ribosomal subunit protein uL11 (142 aa).

The protein belongs to the universal ribosomal protein uL11 family. As to quaternary structure, part of the ribosomal stalk of the 50S ribosomal subunit. Interacts with L10 and the large rRNA to form the base of the stalk. L10 forms an elongated spine to which L12 dimers bind in a sequential fashion forming a multimeric L10(L12)X complex. In terms of processing, one or more lysine residues are methylated.

Forms part of the ribosomal stalk which helps the ribosome interact with GTP-bound translation factors. This is Large ribosomal subunit protein uL11 from Bartonella henselae (strain ATCC 49882 / DSM 28221 / CCUG 30454 / Houston 1) (Rochalimaea henselae).